We begin with the raw amino-acid sequence, 205 residues long: MTPPGRLYLPRVRGTRLLFLLLGLLLALPPRAKGLPGVGLLPSAARAAQQHPQKHFAHGTLKPAAHLVGDPSMQNSLRWRANTDRAFLRHGFSLSNNSLLVPTSGLYFVYSQVVFSGEGCSSKAVSTPLYLAHEVQLFSSQYPFHVPLLSAQKSVCPGPQGPWVRSVYQGAVFLLTRGDQLSTHTDGISHLLFSPSSVFFGAFAL.

A signal peptide spans 1 to 34 (MTPPGRLYLPRVRGTRLLFLLLGLLLALPPRAKG). The region spanning 63 to 205 (PAAHLVGDPS…SSVFFGAFAL (143 aa)) is the THD domain. The N-linked (GlcNAc...) asparagine glycan is linked to Asn96. The cysteines at positions 120 and 156 are disulfide-linked.

The protein belongs to the tumor necrosis factor family. As to quaternary structure, homotrimer, and heterotrimer of either two LTB and one LTA subunits or (less prevalent) two LTA and one LTB subunits. Interacts with TNFRSF14.

It localises to the secreted. The protein localises to the membrane. Functionally, cytokine that in its homotrimeric form binds to TNFRSF1A/TNFR1, TNFRSF1B/TNFBR and TNFRSF14/HVEM. In its heterotrimeric form with LTB binds to TNFRSF3/LTBR. Lymphotoxin is produced by lymphocytes and is cytotoxic for a wide range of tumor cells in vitro and in vivo. The chain is Lymphotoxin-alpha (LTA) from Marmota monax (Woodchuck).